The following is a 1183-amino-acid chain: LRR receptor-like serine/threonine-protein kinase FLS2 (1183 aa).

Positions 1-41 (MERNKFASKMSQHYTKTICIAVVLVAVLFSLSSAAAAGSGA) are cleaved as a signal peptide. Residues 42–809 (AVSVQLEALL…GKKRVFSRTG (768 aa)) are Extracellular-facing. Cysteine 87 and cysteine 94 form a disulfide bridge. N-linked (GlcNAc...) asparagine glycosylation is found at asparagine 88 and asparagine 120. LRR repeat units follow at residues 97–120 (AGQV…FLGN), 121–145 (ISTL…LGRL), 147–169 (ELEQ…LCNC), 171–193 (AMWA…IGDL), 194–217 (SNLE…MAKL), 218–241 (KGIM…IGDL), 242–265 (SNLQ…LGRC), 267–289 (NLTL…LGEL), 290–313 (TNLE…LRRC), 315–337 (SLLN…LGEL), 338–361 (PSLQ…LTNL), 363–385 (NLTI…IGSL), and 386–409 (RNLR…ISNC). Cysteine 167 and cysteine 189 form a disulfide bridge. Asparagine 168 and asparagine 181 each carry an N-linked (GlcNAc...) asparagine glycan. An N-linked (GlcNAc...) asparagine glycan is attached at asparagine 267. Asparagine 363, asparagine 395, asparagine 408, and asparagine 414 each carry an N-linked (GlcNAc...) asparagine glycan. LRR repeat units lie at residues 433-457 (LQSL…LFDC), 459-480 (QLQK…LVGQ), 481-505 (LGNL…IGNM), 507-529 (KLIS…ISNM), 530-553 (SSLQ…VFEL), 555-577 (QLTI…VANL), 578-600 (RSLS…ALGR), 601-625 (LDQL…VIAS), 627-651 (SNVQ…IGGL), 652-675 (VMVQ…LAGC), 676-699 (KNLY…LFPQ), 701-724 (DLLT…IAAL), 725-748 (KHIQ…LANL), and 749-773 (TALR…VFRN). 3 N-linked (GlcNAc...) asparagine glycosylation sites follow: asparagine 483, asparagine 504, and asparagine 528. A glycan (N-linked (GlcNAc...) asparagine) is linked at asparagine 591. The N-linked (GlcNAc...) asparagine glycan is linked to asparagine 634. N-linked (GlcNAc...) asparagine glycosylation is found at asparagine 707, asparagine 747, asparagine 755, and asparagine 773. Residues 810 to 830 (LVILVVLIALSTLLLLMVATI) form a helical membrane-spanning segment. Residues 831 to 1183 (LLVSYRRYRR…LKMSKLVGED (353 aa)) are Cytoplasmic-facing. Residues 876-1179 (FDQGNVIGSS…LSSLLKMSKL (304 aa)) enclose the Protein kinase domain. Residues 882 to 890 (IGSSNLSTV) and lysine 908 contribute to the ATP site. Aspartate 1013 functions as the Proton acceptor in the catalytic mechanism.

It belongs to the protein kinase superfamily. Ser/Thr protein kinase family. Interacts with SERK2.

It localises to the cell membrane. The enzyme catalyses L-seryl-[protein] + ATP = O-phospho-L-seryl-[protein] + ADP + H(+). The catalysed reaction is L-threonyl-[protein] + ATP = O-phospho-L-threonyl-[protein] + ADP + H(+). Its function is as follows. Constitutes the pattern-recognition receptor (PPR) that determines the specific perception of flagellin (flg22), a potent elicitor of the defense response to pathogen-associated molecular patterns (PAMPs). Recognizes flg22 from Pseudomonas aeruginosa and Acidovorax avenae. flg22 is a peptide derived from the bacterial flagellin N-terminus sequence. Does not recognize flg22 from Xanthomonas oryzae pv. oryzae (Xoo) or Xanthomonas oryzae pv. oryzicola (Xoc). The chain is LRR receptor-like serine/threonine-protein kinase FLS2 from Oryza sativa subsp. japonica (Rice).